Reading from the N-terminus, the 290-residue chain is ATP synthase gamma chain (290 aa).

It belongs to the ATPase gamma chain family. F-type ATPases have 2 components, CF(1) - the catalytic core - and CF(0) - the membrane proton channel. CF(1) has five subunits: alpha(3), beta(3), gamma(1), delta(1), epsilon(1). CF(0) has three main subunits: a, b and c.

It localises to the cell inner membrane. Functionally, produces ATP from ADP in the presence of a proton gradient across the membrane. The gamma chain is believed to be important in regulating ATPase activity and the flow of protons through the CF(0) complex. This is ATP synthase gamma chain from Gemmatimonas aurantiaca (strain DSM 14586 / JCM 11422 / NBRC 100505 / T-27).